A 235-amino-acid chain; its full sequence is Putative N-acetylmannosamine-6-phosphate 2-epimerase (235 aa).

The protein belongs to the NanE family.

The enzyme catalyses an N-acyl-D-glucosamine 6-phosphate = an N-acyl-D-mannosamine 6-phosphate. It participates in amino-sugar metabolism; N-acetylneuraminate degradation; D-fructose 6-phosphate from N-acetylneuraminate: step 3/5. Its function is as follows. Converts N-acetylmannosamine-6-phosphate (ManNAc-6-P) to N-acetylglucosamine-6-phosphate (GlcNAc-6-P). The chain is Putative N-acetylmannosamine-6-phosphate 2-epimerase from Enterobacter sp. (strain 638).